The sequence spans 270 residues: Phospholysine phosphohistidine inorganic pyrophosphate phosphatase (270 aa).

Residues aspartate 17 and serine 19 each contribute to the Mg(2+) site. Substrate is bound by residues 17 to 19 (DIS), 54 to 55 (TN), and lysine 189. Residue aspartate 214 coordinates Mg(2+).

This sequence belongs to the HAD-like hydrolase superfamily. Homodimer. It depends on Mg(2+) as a cofactor. Detected in liver (at protein level).

Its subcellular location is the cytoplasm. It is found in the nucleus. The catalysed reaction is diphosphate + H2O = 2 phosphate + H(+). Phosphatase that hydrolyzes imidodiphosphate, 3-phosphohistidine and 6-phospholysine. Has broad substrate specificity and can also hydrolyze inorganic diphosphate, but with lower efficiency. The polypeptide is Phospholysine phosphohistidine inorganic pyrophosphate phosphatase (LHPP) (Bos taurus (Bovine)).